We begin with the raw amino-acid sequence, 687 residues long: Chloride channel protein ClC-Kb (687 aa).

At 1–50 (MEELVGLREGASKKPVPLQELWGPCPRIRRNIQGGLEWLKERLFRVGEDW) the chain is on the cytoplasmic side. 2 consecutive transmembrane segments (helical) span residues 51–82 (YFLVALGVLMALISYAMNFTIGRVVRAHKWLY) and 91–111 (LRYLSWTVYPVALLSFSSGFS). An intramembrane region (helical) is located at residues 116–127 (PSSGGSGIPEVK). Ser-121 contacts chloride. The next 2 membrane-spanning stretches (helical) occupy residues 141–160 (IKNFGAKVVGLSCTLATGST) and 161–180 (IFLGKLGPFVHLSVMIAAYL). The helical intramembrane region spans 203–224 (AGAAVGVATVFAAPISGVLFSI). A helical transmembrane segment spans residues 236 to 255 (YWRGFFAATCGAFMFHLLAV). The Ca(2+) site is built by Glu-259, Glu-261, Asp-278, and Glu-281. A run of 2 helical transmembrane segments spans residues 282-310 (IFFFVALGAICGILSCGYNYSQRTFLFFL) and 325-342 (PLYSALAAVVLASITYPP). The helical intramembrane region spans 349-360 (ASRLSMSEHLET). Transmembrane regions (helical) follow at residues 400–420 (GTLVFFLVMKFWMLILATTIP) and 421–440 (IPAGYFLPIFIYGAVIGRLF). Phe-426 lines the chloride pocket. The helical intramembrane region spans 464-496 (GAYALAGAAAFSGAVTHTLSTALLAFEVTGQLV). The chain crosses the membrane as a helical span at residues 500 to 520 (PVLMAVLAANAISQSFQPSFY). Residues 521–687 (DGTIIVKKLP…STLTNPPAPK (167 aa)) lie on the Cytoplasmic side of the membrane. CBS domains are found at residues 551 to 609 (MNCA…EPAS) and 626 to 687 (CPTQ…PAPK).

It belongs to the chloride channel (TC 2.A.49) family. CLCNKB subfamily. As to quaternary structure, homodimer. Interacts with BSND. Post-translationally, N-glycosylated. In terms of tissue distribution, specifically expressed in the kidney, predominantly in the outer medulla and cortex. All nephron segments expressing BSND also express CLCNK proteins.

The protein resides in the basolateral cell membrane. It catalyses the reaction chloride(in) = chloride(out). The enzyme catalyses iodide(out) = iodide(in). The catalysed reaction is nitrate(in) = nitrate(out). It carries out the reaction bromide(in) = bromide(out). In terms of biological role, anion-selective channel permeable to small monovalent anions with ion selectivity for chloride &gt; bromide &gt; nitrate &gt; iodide. Forms a homodimeric channel where each subunit has its own ion conduction pathway. May conduct double-barreled currents controlled by two types of gates, two fast gates that control each subunit independently and a slow common gate that opens and shuts off both subunits simultaneously. Assembles with the regulatory subunit BSND/Barttin for sorting at the basolateral plasma membrane domain and functional switch to the ion conducting state. CLCNKB:BSND channels display mostly a linear current-voltage relationship controlled by common gate. Mediates chloride conductance along nephron segments, namely the thick ascending limb of Henle's loop, convoluted tubule and the collecting duct, contributing to the maintenance of systemic acid-base and electrolyte homeostasis. Conducts chloride currents in the stria vascularis of the inner ear to establish the endocochlear potential necessary for normal hearing. This Mus musculus (Mouse) protein is Chloride channel protein ClC-Kb.